A 262-amino-acid polypeptide reads, in one-letter code: Acyl-[acyl-carrier-protein]--UDP-N-acetylglucosamine O-acyltransferase (262 aa).

The protein belongs to the transferase hexapeptide repeat family. LpxA subfamily. As to quaternary structure, homotrimer.

Its subcellular location is the cytoplasm. The enzyme catalyses a (3R)-hydroxyacyl-[ACP] + UDP-N-acetyl-alpha-D-glucosamine = a UDP-3-O-[(3R)-3-hydroxyacyl]-N-acetyl-alpha-D-glucosamine + holo-[ACP]. It functions in the pathway glycolipid biosynthesis; lipid IV(A) biosynthesis; lipid IV(A) from (3R)-3-hydroxytetradecanoyl-[acyl-carrier-protein] and UDP-N-acetyl-alpha-D-glucosamine: step 1/6. Functionally, involved in the biosynthesis of lipid A, a phosphorylated glycolipid that anchors the lipopolysaccharide to the outer membrane of the cell. This chain is Acyl-[acyl-carrier-protein]--UDP-N-acetylglucosamine O-acyltransferase, found in Klebsiella pneumoniae (strain 342).